The sequence spans 634 residues: Probable potassium transport system protein Kup 2 (634 aa).

The next 12 helical transmembrane spans lie at 20 to 40 (FWTL…TSPL), 64 to 84 (VLSL…VLLI), 110 to 130 (FAAI…DAII), 148 to 168 (PGFD…LFLV), 174 to 194 (AAVA…MAVA), 224 to 244 (AGLL…ALYA), 258 to 278 (WLVL…AMLL), 290 to 310 (LLFP…ATII), 348 to 368 (IYIP…VFAF), 377 to 397 (AYGI…FFVM), 405 to 425 (AAVA…FLMA), and 430 to 450 (IVDG…VMVT).

It belongs to the HAK/KUP transporter (TC 2.A.72) family.

It is found in the cell inner membrane. It carries out the reaction K(+)(in) + H(+)(in) = K(+)(out) + H(+)(out). Transport of potassium into the cell. Likely operates as a K(+):H(+) symporter. The chain is Probable potassium transport system protein Kup 2 from Rhodopseudomonas palustris (strain ATCC BAA-98 / CGA009).